The chain runs to 166 residues: Large ribosomal subunit protein uL10 (166 aa).

The protein belongs to the universal ribosomal protein uL10 family. Part of the ribosomal stalk of the 50S ribosomal subunit. The N-terminus interacts with L11 and the large rRNA to form the base of the stalk. The C-terminus forms an elongated spine to which L12 dimers bind in a sequential fashion forming a multimeric L10(L12)X complex.

Functionally, forms part of the ribosomal stalk, playing a central role in the interaction of the ribosome with GTP-bound translation factors. The protein is Large ribosomal subunit protein uL10 of Bacillus mycoides (strain KBAB4) (Bacillus weihenstephanensis).